A 603-amino-acid polypeptide reads, in one-letter code: Elongation factor 4 (603 aa).

The 183-residue stretch at 9 to 191 (SNIRNFSIIA…RIVRQIPPPK (183 aa)) folds into the tr-type G domain. Residues 21 to 26 (DHGKST) and 138 to 141 (NKID) contribute to the GTP site.

The protein belongs to the TRAFAC class translation factor GTPase superfamily. Classic translation factor GTPase family. LepA subfamily.

The protein localises to the cell inner membrane. The enzyme catalyses GTP + H2O = GDP + phosphate + H(+). Required for accurate and efficient protein synthesis under certain stress conditions. May act as a fidelity factor of the translation reaction, by catalyzing a one-codon backward translocation of tRNAs on improperly translocated ribosomes. Back-translocation proceeds from a post-translocation (POST) complex to a pre-translocation (PRE) complex, thus giving elongation factor G a second chance to translocate the tRNAs correctly. Binds to ribosomes in a GTP-dependent manner. The polypeptide is Elongation factor 4 (Idiomarina loihiensis (strain ATCC BAA-735 / DSM 15497 / L2-TR)).